Here is a 358-residue protein sequence, read N- to C-terminus: NADH-quinone oxidoreductase subunit H (358 aa).

Helical transmembrane passes span 30 to 50, 96 to 116, 129 to 149, 165 to 185, 201 to 221, 264 to 284, 297 to 317, and 336 to 356; these read IVIG…MIFM, FLYN…FSCL, VGIF…LLAG, GAQM…IVIL, GWFL…YLIA, LFII…PLHI, IPGF…LMWI, and YLVP…VFKL.

The protein belongs to the complex I subunit 1 family. In terms of assembly, NDH-1 is composed of 14 different subunits. Subunits NuoA, H, J, K, L, M, N constitute the membrane sector of the complex.

It is found in the cell inner membrane. It carries out the reaction a quinone + NADH + 5 H(+)(in) = a quinol + NAD(+) + 4 H(+)(out). In terms of biological role, NDH-1 shuttles electrons from NADH, via FMN and iron-sulfur (Fe-S) centers, to quinones in the respiratory chain. The immediate electron acceptor for the enzyme in this species is believed to be ubiquinone. Couples the redox reaction to proton translocation (for every two electrons transferred, four hydrogen ions are translocated across the cytoplasmic membrane), and thus conserves the redox energy in a proton gradient. This subunit may bind ubiquinone. This is NADH-quinone oxidoreductase subunit H from Phocaeicola vulgatus (strain ATCC 8482 / DSM 1447 / JCM 5826 / CCUG 4940 / NBRC 14291 / NCTC 11154) (Bacteroides vulgatus).